A 158-amino-acid chain; its full sequence is 2-C-methyl-D-erythritol 2,4-cyclodiphosphate synthase (158 aa).

Residues Asp9 and His11 each coordinate a divalent metal cation. 4-CDP-2-C-methyl-D-erythritol 2-phosphate is bound by residues 9–11 (DVH) and 35–36 (HS). Residue His43 coordinates a divalent metal cation. 4-CDP-2-C-methyl-D-erythritol 2-phosphate contacts are provided by residues 57–59 (DIG), 62–66 (FPDTD), 101–107 (AQKPKMA), 133–136 (TTTE), Phe140, and Arg143.

The protein belongs to the IspF family. In terms of assembly, homotrimer. Requires a divalent metal cation as cofactor.

The enzyme catalyses 4-CDP-2-C-methyl-D-erythritol 2-phosphate = 2-C-methyl-D-erythritol 2,4-cyclic diphosphate + CMP. The protein operates within isoprenoid biosynthesis; isopentenyl diphosphate biosynthesis via DXP pathway; isopentenyl diphosphate from 1-deoxy-D-xylulose 5-phosphate: step 4/6. In terms of biological role, involved in the biosynthesis of isopentenyl diphosphate (IPP) and dimethylallyl diphosphate (DMAPP), two major building blocks of isoprenoid compounds. Catalyzes the conversion of 4-diphosphocytidyl-2-C-methyl-D-erythritol 2-phosphate (CDP-ME2P) to 2-C-methyl-D-erythritol 2,4-cyclodiphosphate (ME-CPP) with a corresponding release of cytidine 5-monophosphate (CMP). This chain is 2-C-methyl-D-erythritol 2,4-cyclodiphosphate synthase, found in Bacillus cytotoxicus (strain DSM 22905 / CIP 110041 / 391-98 / NVH 391-98).